A 126-amino-acid polypeptide reads, in one-letter code: Follitropin subunit beta (126 aa).

Residues 1 to 19 form the signal peptide; that stretch reads MKLIQLCILFWCWRAICCQ. Intrachain disulfides connect C21-C69, C35-C84, C38-C122, C46-C100, C50-C102, and C105-C112. Residues N25 and N42 are each glycosylated (N-linked (GlcNAc...) asparagine).

Belongs to the glycoprotein hormones subunit beta family. As to quaternary structure, heterodimer. The active follitropin is a heterodimer composed of an alpha chain/CGA shared with other hormones and a unique beta chain/FSHB shown here.

It is found in the secreted. Together with the alpha chain CGA constitutes follitropin, the follicle-stimulating hormone, and provides its biological specificity to the hormone heterodimer. Binds FSHR, a G protein-coupled receptor, on target cells to activate downstream signaling pathways. Follitropin is involved in follicle development and spermatogenesis in reproductive organs. This is Follitropin subunit beta (FSHB) from Phodopus sungorus (Striped hairy-footed hamster).